Here is a 384-residue protein sequence, read N- to C-terminus: Spermidine/putrescine import ATP-binding protein PotA (384 aa).

One can recognise an ABC transporter domain in the interval 26-260 (ISLEKVSKTY…PATRFVAGFI (235 aa)). 62 to 69 (GPSGCGKT) is an ATP binding site.

It belongs to the ABC transporter superfamily. Spermidine/putrescine importer (TC 3.A.1.11.1) family. As to quaternary structure, the complex is composed of two ATP-binding proteins (PotA), two transmembrane proteins (PotB and PotC) and a solute-binding protein (PotD).

The protein localises to the cell membrane. The catalysed reaction is ATP + H2O + polyamine-[polyamine-binding protein]Side 1 = ADP + phosphate + polyamineSide 2 + [polyamine-binding protein]Side 1.. In terms of biological role, part of the ABC transporter complex PotABCD involved in spermidine/putrescine import. Responsible for energy coupling to the transport system. In Thermobifida fusca (strain YX), this protein is Spermidine/putrescine import ATP-binding protein PotA.